A 352-amino-acid polypeptide reads, in one-letter code: tRNA-specific 2-thiouridylase MnmA (352 aa).

Residues 7 to 14 (GLSGGVDS) and Leu33 each bind ATP. Cys94 (nucleophile) is an active-site residue. The cysteines at positions 94 and 193 are disulfide-linked. Position 119 (Gly119) interacts with ATP. Residues 143-145 (KDQ) are interaction with tRNA. Cys193 serves as the catalytic Cysteine persulfide intermediate. Positions 298–299 (RY) are interaction with tRNA.

Belongs to the MnmA/TRMU family.

The protein resides in the cytoplasm. It carries out the reaction S-sulfanyl-L-cysteinyl-[protein] + uridine(34) in tRNA + AH2 + ATP = 2-thiouridine(34) in tRNA + L-cysteinyl-[protein] + A + AMP + diphosphate + H(+). In terms of biological role, catalyzes the 2-thiolation of uridine at the wobble position (U34) of tRNA, leading to the formation of s(2)U34. In Trichormus variabilis (strain ATCC 29413 / PCC 7937) (Anabaena variabilis), this protein is tRNA-specific 2-thiouridylase MnmA.